We begin with the raw amino-acid sequence, 384 residues long: S-adenosylmethionine synthase (384 aa).

Histidine 15 provides a ligand contact to ATP. Residue aspartate 17 coordinates Mg(2+). Residue glutamate 43 participates in K(+) binding. Residues glutamate 56 and glutamine 99 each contribute to the L-methionine site. The flexible loop stretch occupies residues 99–109 (QSPDINQGVDR). ATP contacts are provided by residues 164-166 (DAK), 230-231 (RF), aspartate 239, 245-246 (RK), alanine 262, and lysine 266. Aspartate 239 serves as a coordination point for L-methionine. Lysine 270 is a binding site for L-methionine.

The protein belongs to the AdoMet synthase family. In terms of assembly, homotetramer; dimer of dimers. The cofactor is Mg(2+). K(+) serves as cofactor.

Its subcellular location is the cytoplasm. The catalysed reaction is L-methionine + ATP + H2O = S-adenosyl-L-methionine + phosphate + diphosphate. The protein operates within amino-acid biosynthesis; S-adenosyl-L-methionine biosynthesis; S-adenosyl-L-methionine from L-methionine: step 1/1. In terms of biological role, catalyzes the formation of S-adenosylmethionine (AdoMet) from methionine and ATP. The overall synthetic reaction is composed of two sequential steps, AdoMet formation and the subsequent tripolyphosphate hydrolysis which occurs prior to release of AdoMet from the enzyme. The sequence is that of S-adenosylmethionine synthase from Salmonella agona (strain SL483).